Consider the following 1703-residue polypeptide: Pecanex-like protein 1 (1703 aa).

A run of 2 helical transmembrane segments spans residues 31-53 and 57-74; these read VNAL…YMAL and MVIV…FLLL. Positions 91 to 100 are enriched in basic and acidic residues; that stretch reads VEHQTRESKG. Residues 91 to 126 are disordered; that stretch reads VEHQTRESKGSRGGTGGANDPVTRREDSNGLGDPGG. N256 is a glycosylation site (N-linked (GlcNAc...) asparagine). The next 3 membrane-spanning stretches (helical) occupy residues 416 to 438, 477 to 499, and 525 to 547; these read VLAV…HGFF, AYSR…YGSL, and LVIV…QVNT. N564 carries an N-linked (GlcNAc...) asparagine glycan. 4 helical membrane passes run 569–591, 603–622, 675–697, and 704–721; these read LLSA…CFCY, IPVL…YHLS, LIVC…FIAL, and VLYG…YLLP. N-linked (GlcNAc...) asparagine glycosylation is found at N988, N1129, and N1391. Disordered stretches follow at residues 1475–1556 and 1577–1598; these read VQSG…HSIP and TDPL…PTHA. 2 stretches are compositionally biased toward low complexity: residues 1485–1510 and 1518–1556; these read ARAS…RTST and RSST…HSIP. Basic residues predominate over residues 1582-1591; the sequence is QHHHPHHHPQ. N1622 carries N-linked (GlcNAc...) asparagine glycosylation.

The protein belongs to the pecanex family.

The protein resides in the membrane. In Takifugu rubripes (Japanese pufferfish), this protein is Pecanex-like protein 1.